The primary structure comprises 313 residues: 4-hydroxy-3-methylbut-2-enyl diphosphate reductase (313 aa).

C12 contributes to the [4Fe-4S] cluster binding site. Residues H41 and H74 each contribute to the (2E)-4-hydroxy-3-methylbut-2-enyl diphosphate site. Dimethylallyl diphosphate is bound by residues H41 and H74. Isopentenyl diphosphate is bound by residues H41 and H74. C96 contacts [4Fe-4S] cluster. H124 provides a ligand contact to (2E)-4-hydroxy-3-methylbut-2-enyl diphosphate. Residue H124 participates in dimethylallyl diphosphate binding. H124 is a binding site for isopentenyl diphosphate. E126 serves as the catalytic Proton donor. T167 contacts (2E)-4-hydroxy-3-methylbut-2-enyl diphosphate. Residue C197 coordinates [4Fe-4S] cluster. (2E)-4-hydroxy-3-methylbut-2-enyl diphosphate is bound by residues S225, S226, N227, and S269. Dimethylallyl diphosphate contacts are provided by S225, S226, N227, and S269. Isopentenyl diphosphate-binding residues include S225, S226, N227, and S269.

It belongs to the IspH family. The cofactor is [4Fe-4S] cluster.

It catalyses the reaction isopentenyl diphosphate + 2 oxidized [2Fe-2S]-[ferredoxin] + H2O = (2E)-4-hydroxy-3-methylbut-2-enyl diphosphate + 2 reduced [2Fe-2S]-[ferredoxin] + 2 H(+). It carries out the reaction dimethylallyl diphosphate + 2 oxidized [2Fe-2S]-[ferredoxin] + H2O = (2E)-4-hydroxy-3-methylbut-2-enyl diphosphate + 2 reduced [2Fe-2S]-[ferredoxin] + 2 H(+). It participates in isoprenoid biosynthesis; dimethylallyl diphosphate biosynthesis; dimethylallyl diphosphate from (2E)-4-hydroxy-3-methylbutenyl diphosphate: step 1/1. The protein operates within isoprenoid biosynthesis; isopentenyl diphosphate biosynthesis via DXP pathway; isopentenyl diphosphate from 1-deoxy-D-xylulose 5-phosphate: step 6/6. Functionally, catalyzes the conversion of 1-hydroxy-2-methyl-2-(E)-butenyl 4-diphosphate (HMBPP) into a mixture of isopentenyl diphosphate (IPP) and dimethylallyl diphosphate (DMAPP). Acts in the terminal step of the DOXP/MEP pathway for isoprenoid precursor biosynthesis. This chain is 4-hydroxy-3-methylbut-2-enyl diphosphate reductase, found in Baumannia cicadellinicola subsp. Homalodisca coagulata.